A 446-amino-acid polypeptide reads, in one-letter code: Probable glucan endo-1,3-beta-glucosidase eglC (446 aa).

An N-terminal signal peptide occupies residues 1–18; the sequence is MQFTHLVALALALATSEA. The active-site Proton donor is glutamate 128. The N-linked (GlcNAc...) asparagine glycan is linked to asparagine 183. Catalysis depends on glutamate 239, which acts as the Nucleophile. N-linked (GlcNAc...) asparagine glycans are attached at residues asparagine 364 and asparagine 370. Residues 393 to 416 are disordered; the sequence is SSGAGASGASGQSSSSTGSSSAPS. A compositionally biased stretch (low complexity) spans 401–416; the sequence is ASGQSSSSTGSSSAPS. Asparagine 423 carries the GPI-anchor amidated asparagine lipid modification. Positions 424-446 are cleaved as a propeptide — removed in mature form; sequence AASGLSGSIFGAVVAVCLALAAL.

Belongs to the glycosyl hydrolase 17 family. The GPI-anchor is attached to the protein in the endoplasmic reticulum and serves to target the protein to the cell surface. There, the glucosamine-inositol phospholipid moiety is cleaved off and the GPI-modified mannoprotein is covalently attached via its lipidless GPI glycan remnant to the 1,6-beta-glucan of the outer cell wall layer.

It is found in the cell membrane. The protein resides in the secreted. The protein localises to the cell wall. It carries out the reaction Hydrolysis of (1-&gt;3)-beta-D-glucosidic linkages in (1-&gt;3)-beta-D-glucans.. Glucanases play a role in cell expansion during growth, in cell-cell fusion during mating, and in spore release during sporulation. This enzyme may be involved in beta-glucan degradation and also function biosynthetically as a transglycosylase. The protein is Probable glucan endo-1,3-beta-glucosidase eglC (eglC) of Aspergillus fumigatus (strain ATCC MYA-4609 / CBS 101355 / FGSC A1100 / Af293) (Neosartorya fumigata).